We begin with the raw amino-acid sequence, 486 residues long: Glutamate--tRNA ligase (486 aa).

The 'HIGH' region signature appears at 11-21 (PSPTGLLHIGN). A 'KMSKS' region motif is present at residues 255-259 (KLSKR). Lysine 258 serves as a coordination point for ATP.

Belongs to the class-I aminoacyl-tRNA synthetase family. Glutamate--tRNA ligase type 1 subfamily. Monomer.

The protein localises to the cytoplasm. It carries out the reaction tRNA(Glu) + L-glutamate + ATP = L-glutamyl-tRNA(Glu) + AMP + diphosphate. Catalyzes the attachment of glutamate to tRNA(Glu) in a two-step reaction: glutamate is first activated by ATP to form Glu-AMP and then transferred to the acceptor end of tRNA(Glu). This chain is Glutamate--tRNA ligase, found in Streptococcus pneumoniae (strain ATCC BAA-255 / R6).